A 118-amino-acid chain; its full sequence is Beta-2-microglobulin (118 aa).

Residues 1-20 form the signal peptide; it reads MARVVALVLLGLLSLTGLEA. The Ig-like C1-type domain maps to 22–115; it reads PRVPKVQVYS…LKDPLIVKWD (94 aa). Cys-45 and Cys-99 are oxidised to a cystine.

It belongs to the beta-2-microglobulin family. Heterodimer of an alpha chain and a beta chain. Beta-2-microglobulin is the beta-chain of major histocompatibility complex class I molecules.

It is found in the secreted. Component of the class I major histocompatibility complex (MHC). Involved in the presentation of peptide antigens to the immune system. The chain is Beta-2-microglobulin (B2M) from Equus caballus (Horse).